A 328-amino-acid chain; its full sequence is Coiled-coil domain-containing protein 54 (328 aa).

Residues 122 to 151 (TTKDILSMKEDIKALKKKVTELEKQNSYSR) are a coiled coil. Thr182 carries the post-translational modification Phosphothreonine. Residues 186 to 197 (TDREMSSAEPEK) show a composition bias toward basic and acidic residues. The interval 186–205 (TDREMSSAEPEKVPSYPKST) is disordered.

This is Coiled-coil domain-containing protein 54 (CCDC54) from Macaca fascicularis (Crab-eating macaque).